Consider the following 532-residue polypeptide: Bone morphogenetic protein receptor type-1A (532 aa).

The N-terminal stretch at 1-23 (MPQLYIYIRLLGAYLFIISRVQG) is a signal peptide. The Extracellular portion of the chain corresponds to 24–152 (QNLDSMLHGT…IGPFFDGSIR (129 aa)). Disulfide bonds link cysteine 61/cysteine 82, cysteine 63/cysteine 67, and cysteine 76/cysteine 100. Asparagine 73 carries an N-linked (GlcNAc...) asparagine glycan. The segment at 107–109 (DFQ) is mediates specificity for BMP ligand. Cystine bridges form between cysteine 110–cysteine 124 and cysteine 125–cysteine 130. A helical membrane pass occupies residues 153–176 (WLVLLISMAVCIIAMIIFSSCFCY). Over 177 to 532 (KHYCKSISSR…KMVESQDVKI (356 aa)) the chain is Cytoplasmic. Positions 204 to 233 (ESLKDLIDQSQSSGSGSGLPLLVQRTIAKQ) constitute a GS domain. The Protein kinase domain maps to 234–525 (IQMVRQVGKG…RIKKTLAKMV (292 aa)). ATP is bound by residues 240–248 (VGKGRYGEV) and lysine 261. Residue aspartate 362 is the Proton acceptor of the active site.

It belongs to the protein kinase superfamily. TKL Ser/Thr protein kinase family. TGFB receptor subfamily. In terms of assembly, interacts with low affinity with GDF5; positively regulates chondrocyte differentiation. Interacts with BMP4. Interacts with SCUBE3. Interacts with TSC22D1/TSC-22. Interacts with BMP2; the interaction may induce HAMP expression. Interacts with BMP6. Interacts with heterodimers composed of BMP2 and BMP6 in vitro; the interaction may induce HAMP expression. Interacts with TGFBR3. Mg(2+) serves as cofactor. Requires Mn(2+) as cofactor. In terms of processing, glycosylated. Highly expressed in skeletal muscle.

The protein resides in the cell membrane. It is found in the cell surface. The enzyme catalyses L-threonyl-[receptor-protein] + ATP = O-phospho-L-threonyl-[receptor-protein] + ADP + H(+). It carries out the reaction L-seryl-[receptor-protein] + ATP = O-phospho-L-seryl-[receptor-protein] + ADP + H(+). On ligand binding, forms a receptor complex consisting of two type II and two type I transmembrane serine/threonine kinases. Type II receptors phosphorylate and activate type I receptors which autophosphorylate, then bind and activate SMAD transcriptional regulators. Receptor for BMP2, BMP4, GDF5 and GDF6. Positively regulates chondrocyte differentiation through GDF5 interaction. Mediates induction of adipogenesis by GDF6. May promote the expression of HAMP, potentially via its interaction with BMP2. This chain is Bone morphogenetic protein receptor type-1A (BMPR1A), found in Homo sapiens (Human).